Consider the following 78-residue polypeptide: uncharacterized protein (78 aa).

The N-terminal stretch at Met1 to Ala45 is a signal peptide.

It to E.coli YkfL.

This is an uncharacterized protein from Escherichia coli (strain K12).